Here is a 370-residue protein sequence, read N- to C-terminus: DNA replication and repair protein RecF (370 aa).

30–37 is a binding site for ATP; sequence GENAQGKT.

It belongs to the RecF family.

Its subcellular location is the cytoplasm. Functionally, the RecF protein is involved in DNA metabolism; it is required for DNA replication and normal SOS inducibility. RecF binds preferentially to single-stranded, linear DNA. It also seems to bind ATP. The sequence is that of DNA replication and repair protein RecF from Listeria monocytogenes serotype 4b (strain CLIP80459).